Here is a 239-residue protein sequence, read N- to C-terminus: Small ribosomal subunit protein uS2 (239 aa).

It belongs to the universal ribosomal protein uS2 family.

The chain is Small ribosomal subunit protein uS2 from Francisella philomiragia subsp. philomiragia (strain ATCC 25017 / CCUG 19701 / FSC 153 / O#319-036).